The chain runs to 345 residues: Myb/SANT-like DNA-binding domain-containing protein 4 (345 aa).

Positions 4 to 77 (LKRKRKSNFS…EVKRRYLDWR (74 aa)) constitute a Myb-like domain. A Glycyl lysine isopeptide (Lys-Gly) (interchain with G-Cter in SUMO2) cross-link involves residue lysine 9. Position 106 is a phosphoserine (serine 106). Residues lysine 114 and lysine 142 each participate in a glycyl lysine isopeptide (Lys-Gly) (interchain with G-Cter in SUMO2) cross-link. Residues 141 to 160 (VKVEEEERDPQSPEFEIEEE) are disordered. A Phosphothreonine modification is found at threonine 188. Residues 203 to 345 (LLVNIEKQKL…LRIQKEGHLQ (143 aa)) adopt a coiled-coil conformation. Glycyl lysine isopeptide (Lys-Gly) (interchain with G-Cter in SUMO2) cross-links involve residues lysine 237, lysine 254, and lysine 273.

The sequence is that of Myb/SANT-like DNA-binding domain-containing protein 4 (MSANTD4) from Bos taurus (Bovine).